Consider the following 281-residue polypeptide: Bifunctional protein FolD (281 aa).

NADP(+) contacts are provided by residues 165 to 167, T192, and V233; that span reads GRG.

The protein belongs to the tetrahydrofolate dehydrogenase/cyclohydrolase family. As to quaternary structure, homodimer.

The catalysed reaction is (6R)-5,10-methylene-5,6,7,8-tetrahydrofolate + NADP(+) = (6R)-5,10-methenyltetrahydrofolate + NADPH. The enzyme catalyses (6R)-5,10-methenyltetrahydrofolate + H2O = (6R)-10-formyltetrahydrofolate + H(+). It functions in the pathway one-carbon metabolism; tetrahydrofolate interconversion. Catalyzes the oxidation of 5,10-methylenetetrahydrofolate to 5,10-methenyltetrahydrofolate and then the hydrolysis of 5,10-methenyltetrahydrofolate to 10-formyltetrahydrofolate. The sequence is that of Bifunctional protein FolD from Mycobacterium bovis (strain BCG / Tokyo 172 / ATCC 35737 / TMC 1019).